The following is a 661-amino-acid chain: Hemocyanin C chain (661 aa).

The cysteines at positions 3 and 557 are disulfide-linked. Residues His200, His204, His230, His350, His354, and His390 each contribute to the Cu cation site. Asn476 carries an N-linked (GlcNAc...) asparagine glycan.

It belongs to the tyrosinase family. Hemocyanin subfamily. As to quaternary structure, hexamer of a number of different chains, of which A, B, and C have been identified. In terms of tissue distribution, hemolymph.

It is found in the secreted. It localises to the extracellular space. In terms of biological role, hemocyanins are copper-containing oxygen carriers occurring freely dissolved in the hemolymph of many mollusks and arthropods. The sequence is that of Hemocyanin C chain from Panulirus interruptus (California spiny lobster).